A 494-amino-acid chain; its full sequence is Cobyrinate a,c-diamide synthase (494 aa).

The GATase cobBQ-type domain maps to K270–E475. The active-site Nucleophile is the C352.

It belongs to the CobB/CbiA family. Mg(2+) serves as cofactor.

It carries out the reaction cob(II)yrinate + 2 L-glutamine + 2 ATP + 2 H2O = cob(II)yrinate a,c diamide + 2 L-glutamate + 2 ADP + 2 phosphate + 2 H(+). The catalysed reaction is Ni-sirohydrochlorin + 2 L-glutamine + 2 ATP + 2 H2O = Ni-sirohydrochlorin a,c-diamide + 2 L-glutamate + 2 ADP + 2 phosphate + 2 H(+). It participates in cofactor biosynthesis; adenosylcobalamin biosynthesis; cob(II)yrinate a,c-diamide from sirohydrochlorin (anaerobic route): step 10/10. Its function is as follows. Catalyzes the ATP-dependent amidation of the two carboxylate groups at positions a and c of cobyrinate, using either L-glutamine or ammonia as the nitrogen source (Potential). Involved in the biosynthesis of the unique nickel-containing tetrapyrrole coenzyme F430, the prosthetic group of methyl-coenzyme M reductase (MCR), which plays a key role in methanogenesis and anaerobic methane oxidation. Catalyzes the ATP-dependent amidation of the two carboxylate groups at positions a and c of Ni-sirohydrochlorin, using L-glutamine or ammonia as the nitrogen source. Also able to use sirohydrochlorin as substrate, but only produces a monoamide species in a much slower reaction. Unable to use other metallosirohydrochlorins such as sirohaem and Co-sirohydrochlorin. The chain is Cobyrinate a,c-diamide synthase from Methanosarcina barkeri (strain Fusaro / DSM 804).